Consider the following 162-residue polypeptide: Retinoic acid receptor responder protein 2 (162 aa).

The first 20 residues, 1-20 (MKCLLISLALWLGTVGTRGT), serve as a signal peptide directing secretion. Intrachain disulfides connect Cys-79-Cys-89, Cys-100-Cys-119, and Cys-103-Cys-134. Residues 157-162 (RALRTK) constitute a propeptide that is removed on maturation.

In terms of processing, secreted in an inactive precursor form, prochemerin, which is proteolytically processed by a variety of extracellular proteases to generate forms with differing levels of bioactivity. For example, the removal of six amino acids results in chemerin-156, which exhibits the highest activity, while removal of seven amino acids results in chemerin-155 which has slightly less activity. Some proteases are able to cleave at more than one site and chemerin forms may be sequentially processed by different enzymes to modulate activity levels. The coordinated expression and activity of chemerin-modifying enzymes is essential for regulating its bioactivation, inactivation and, consequently, biological function. Cathepsin G cleaves seven C-terminal amino acids from prochemerin (chemerin-155), elastase is able to cleave six (chemerin-156), eight (chemerin-154) or eleven (chemerin-151), plasmin cleaves five amino acids (chemerin-157), and tryptase cleaves five (chemerin-157) or eight (chemerin-154). Multiple cleavages might be required to fully activate chemerin, with an initial tryptase cleavage resulting in chemerin with low activity (chemerin-157), and a second cleavage by carboxypeptidase N or B producing highly active chemerin (chemerin-156). In terms of tissue distribution, expressed in the differentiated adipocytes (at protein level). Abundantly expressed in the liver, adipose tissue including visceral, epididymal, and brown adipose tissue.

It is found in the secreted. Functionally, adipocyte-secreted protein (adipokine) that regulates adipogenesis, metabolism and inflammation through activation of the chemokine-like receptor 1 (CMKLR1). Also acts as a ligand for CMKLR2. Can also bind to C-C chemokine receptor-like 2 (CCRL2), but with a lower affinity than it does to CMKLR1 or CMKLR2. Positively regulates adipocyte differentiation, modulates the expression of adipocyte genes involved in lipid and glucose metabolism and might play a role in angiogenesis, a process essential for the expansion of white adipose tissue. Also acts as a pro-inflammatory adipokine, causing an increase in secretion of pro-inflammatory and prodiabetic adipokines, which further impair adipose tissue metabolic function and have negative systemic effects including impaired insulin sensitivity, altered glucose and lipid metabolism, and a decrease in vascular function in other tissues. Can have both pro- and anti-inflammatory properties depending on the modality of enzymatic cleavage by different classes of proteases. Acts as a chemotactic factor for leukocyte populations expressing CMKLR1, particularly immature plasmacytoid dendritic cells, but also immature myeloid DCs, macrophages and natural killer cells. Exerts an anti-inflammatory role by preventing TNF/TNFA-induced VCAM1 expression and monocytes adhesion in vascular endothelial cells. The effect is mediated via inhibiting activation of NF-kappa-B and CRK/p38 through stimulation of AKT1/NOS3 signaling and nitric oxide production. Exhibits an antimicrobial function in the skin. The protein is Retinoic acid receptor responder protein 2 (Rarres2) of Mus musculus (Mouse).